A 260-amino-acid chain; its full sequence is Snake venom serine protease serpentokallikrein-1 (260 aa).

The N-terminal stretch at 1–18 (MVLIRVLANLLILQLSYA) is a signal peptide. The propeptide occupies 19–24 (QRTSEL). The Peptidase S1 domain maps to 25-251 (VIGGDECNIN…HLDWIKSIIA (227 aa)). Intrachain disulfides connect cysteine 31–cysteine 165, cysteine 52–cysteine 68, cysteine 102–cysteine 258, cysteine 144–cysteine 212, cysteine 176–cysteine 191, and cysteine 202–cysteine 227. The active-site Charge relay system is histidine 67. N-linked (GlcNAc...) asparagine glycosylation is found at asparagine 81 and asparagine 105. The active-site Charge relay system is the aspartate 112. N-linked (GlcNAc...) asparagine glycans are attached at residues asparagine 156 and asparagine 172. The active-site Charge relay system is serine 206.

This sequence belongs to the peptidase S1 family. Snake venom subfamily. Monomer. As to expression, expressed by the venom gland.

It localises to the secreted. Its function is as follows. Snake venom serine protease that may act in the hemostasis system of the prey. In Protobothrops mucrosquamatus (Taiwan habu), this protein is Snake venom serine protease serpentokallikrein-1.